Consider the following 325-residue polypeptide: Cytochrome f (325 aa).

Residues 1–40 form the signal peptide; it reads MKTPELMAIWQRLKTACLVAIATFGLFFASDVLFPQAAAA. Heme contacts are provided by tyrosine 41, cysteine 62, cysteine 65, and histidine 66. A helical transmembrane segment spans residues 290–309; sequence IYGYMAFVAGIMLTQIFLVL.

The protein belongs to the cytochrome f family. In terms of assembly, the 4 large subunits of the cytochrome b6-f complex are cytochrome b6, subunit IV (17 kDa polypeptide, PetD), cytochrome f and the Rieske protein, while the 4 small subunits are PetG, PetL, PetM and PetN. The complex functions as a dimer. Heme serves as cofactor.

It localises to the cellular thylakoid membrane. Its function is as follows. Component of the cytochrome b6-f complex, which mediates electron transfer between photosystem II (PSII) and photosystem I (PSI), cyclic electron flow around PSI, and state transitions. The chain is Cytochrome f (petA) from Picosynechococcus sp. (strain ATCC 27264 / PCC 7002 / PR-6) (Agmenellum quadruplicatum).